The sequence spans 64 residues: Large ribosomal subunit protein bL28c (64 aa).

The protein belongs to the bacterial ribosomal protein bL28 family.

Its subcellular location is the plastid. The protein resides in the chloroplast. This is Large ribosomal subunit protein bL28c from Gracilaria tenuistipitata var. liui (Red alga).